We begin with the raw amino-acid sequence, 197 residues long: Beta-crystallin A2 (197 aa).

Positions 1 to 11 (MSSAPAPGSAP) are N-terminal arm. Beta/gamma crystallin 'Greek key' domains lie at 12–52 (VCLT…KVEN) and 53–99 (GAWV…RPVL). The tract at residues 100 to 105 (CANHSD) is connecting peptide. Beta/gamma crystallin 'Greek key' domains follow at residues 106-147 (SRVT…KVSS) and 148-196 (GAWV…RRVQ).

Belongs to the beta/gamma-crystallin family. Homo/heterodimer, or complexes of higher-order. The structure of beta-crystallin oligomers seems to be stabilized through interactions between the N-terminal arms.

In terms of biological role, crystallins are the dominant structural components of the vertebrate eye lens. This Mus musculus (Mouse) protein is Beta-crystallin A2 (Cryba2).